A 107-amino-acid polypeptide reads, in one-letter code: Protein Rev (107 aa).

A phosphoserine; by host CK2 mark is found at serine 5 and serine 8. The tract at residues isoleucine 18 to asparagine 26 is homomultimerization. 2 disordered regions span residues asparagine 26–arginine 48 and leucine 81–proline 107. The short motif at threonine 34–arginine 50 is the Nuclear localization signal and RNA-binding (RRE) element. Basic residues predominate over residues glutamine 36–arginine 48. Positions leucine 73–aspartate 84 match the Nuclear export signal and binding to XPO1 motif. Over residues serine 89–threonine 101 the composition is skewed to low complexity. A Phosphoserine; by host modification is found at serine 92.

This sequence belongs to the HIV-1 REV protein family. As to quaternary structure, homomultimer; when bound to the RRE. Multimeric assembly is essential for activity and may involve XPO1. Binds to human KPNB1, XPO1, TNPO1, RANBP5 and IPO7. Interacts with the viral Integrase. Interacts with human KHDRBS1. Interacts with human NAP1; this interaction decreases Rev multimerization and stimulates its activity. Interacts with human DEAD-box helicases DDX3 and DDX24; these interactions may serve for viral RNA export to the cytoplasm and packaging, respectively. Interacts with human PSIP1; this interaction may inhibit HIV-1 DNA integration by promoting dissociation of the Integrase-LEDGF/p75 complex. Asymmetrically arginine dimethylated at one site by host PRMT6. Methylation impairs the RNA-binding activity and export of viral RNA from the nucleus to the cytoplasm. In terms of processing, phosphorylated by protein kinase CK2. Presence of, and maybe binding to the N-terminus of the regulatory beta subunit of CK2 is necessary for CK2-mediated Rev's phosphorylation.

The protein localises to the host nucleus. The protein resides in the host nucleolus. Its subcellular location is the host cytoplasm. In terms of biological role, escorts unspliced or incompletely spliced viral pre-mRNAs (late transcripts) out of the nucleus of infected cells. These pre-mRNAs carry a recognition sequence called Rev responsive element (RRE) located in the env gene, that is not present in fully spliced viral mRNAs (early transcripts). This function is essential since most viral proteins are translated from unspliced or partially spliced pre-mRNAs which cannot exit the nucleus by the pathway used by fully processed cellular mRNAs. Rev itself is translated from a fully spliced mRNA that readily exits the nucleus. Rev's nuclear localization signal (NLS) binds directly to KPNB1/Importin beta-1 without previous binding to KPNA1/Importin alpha-1. KPNB1 binds to the GDP bound form of RAN (Ran-GDP) and targets Rev to the nucleus. In the nucleus, the conversion from Ran-GDP to Ran-GTP dissociates Rev from KPNB1 and allows Rev's binding to the RRE in viral pre-mRNAs. Rev multimerization on the RRE via cooperative assembly exposes its nuclear export signal (NES) to the surface. Rev can then form a complex with XPO1/CRM1 and Ran-GTP, leading to nuclear export of the complex. Conversion from Ran-GTP to Ran-GDP mediates dissociation of the Rev/RRE/XPO1/RAN complex, so that Rev can return to the nucleus for a subsequent round of export. Beside KPNB1, also seems to interact with TNPO1/Transportin-1, RANBP5/IPO5 and IPO7/RANBP7 for nuclear import. The nucleoporin-like HRB/RIP is an essential cofactor that probably indirectly interacts with Rev to release HIV RNAs from the perinuclear region to the cytoplasm. The sequence is that of Protein Rev from Homo sapiens (Human).